The primary structure comprises 412 residues: Probable serine/threonine-protein kinase PBL10 (412 aa).

A lipid anchor (N-myristoyl glycine) is attached at glycine 2. Cysteine 4 is lipidated: S-palmitoyl cysteine. A disordered region spans residues glycine 15–glutamate 45. Polar residues predominate over residues serine 23–arginine 43. The residue at position 58 (threonine 58) is a Phosphothreonine. The Protein kinase domain maps to phenylalanine 69–threonine 356. ATP-binding positions include leucine 75–valine 83 and lysine 107. At tyrosine 152 the chain carries Phosphotyrosine. Aspartate 204 acts as the Proton acceptor in catalysis. Residues serine 208 and serine 238 each carry the phosphoserine modification. Phosphothreonine occurs at positions 239 and 244. Residue tyrosine 252 is modified to Phosphotyrosine.

This sequence belongs to the protein kinase superfamily. Ser/Thr protein kinase family. As to quaternary structure, interacts with the Xanthomonas campestris effector XopAC/AvrAC. In terms of tissue distribution, expressed in stomatal guard cells of leaves.

Its subcellular location is the cell membrane. The enzyme catalyses L-seryl-[protein] + ATP = O-phospho-L-seryl-[protein] + ADP + H(+). It carries out the reaction L-threonyl-[protein] + ATP = O-phospho-L-threonyl-[protein] + ADP + H(+). Possible bi-functional kinase. In vitro, it exhibits serine/threonine activity. In vivo, can phosphorylate tyrosine residues of limited substrates. May be involved in plant defense signaling. Required for full light-induced stomatal opening. The protein is Probable serine/threonine-protein kinase PBL10 of Arabidopsis thaliana (Mouse-ear cress).